Consider the following 295-residue polypeptide: Acetylglutamate kinase (295 aa).

Substrate-binding positions include 70–71, Arg92, and Asn191; that span reads GG.

It belongs to the acetylglutamate kinase family. ArgB subfamily.

The protein localises to the cytoplasm. The enzyme catalyses N-acetyl-L-glutamate + ATP = N-acetyl-L-glutamyl 5-phosphate + ADP. Its pathway is amino-acid biosynthesis; L-arginine biosynthesis; N(2)-acetyl-L-ornithine from L-glutamate: step 2/4. Its function is as follows. Catalyzes the ATP-dependent phosphorylation of N-acetyl-L-glutamate. The chain is Acetylglutamate kinase from Mycobacterium avium (strain 104).